A 335-amino-acid polypeptide reads, in one-letter code: MRN complex-interacting protein (335 aa).

2 disordered regions span residues 75-102 (EEAVNGSEEENAGPLQAEAGSQQAPSKP) and 118-194 (QELD…ALST). A Phosphoserine modification is found at serine 100. Positions 129–142 (TQLSTSAERPSSPA) are enriched in polar residues. Residues 145 to 148 (RKRK) carry the Nuclear localization signal (NLS) motif. The span at 177 to 194 (STGLFGTEQQGTSPALST) shows a compositional bias: polar residues. Residues 203–230 (FPRWKLPSPVTQVNAPSSKWARFLLAPG) are necessary for the association with the MRN complex. Positions 273 to 335 (RPPQAIHTTT…TTGEDFDDDL (63 aa)) are disordered. Over residues 286-297 (DRPDRKTREQPR) the composition is skewed to basic and acidic residues.

It belongs to the MRNIP family. In terms of assembly, associates with the MRE11-RAD50-NBN (MRN) damage-sensing complex; this association is constitutive. Interacts with MRE11. Interacts with NBN. Interacts with RAD50. Phosphorylated; phosphorylation is constitutive and occurs in the absence of any DNA-damaging stimulus. Phosphorylation is necessary for its nuclear retention.

It localises to the nucleus. The protein localises to the nucleoplasm. Its function is as follows. Plays a role in the cellular response to DNA damage and the maintenance of genome stability through its association with the MRN damage-sensing complex. Promotes chromatin loading and activity of the MRN complex to facilitate subsequent ATM-mediated DNA damage response signaling and DNA repair. This chain is MRN complex-interacting protein, found in Mus musculus (Mouse).